A 470-amino-acid chain; its full sequence is Glucose-1-phosphate adenylyltransferase large subunit 1 (470 aa).

This sequence belongs to the bacterial/plant glucose-1-phosphate adenylyltransferase family. Heterotetramer. Prominently expressed in the leaves and a weaker expression is seen in the tubers.

It localises to the plastid. It is found in the chloroplast. The protein localises to the amyloplast. It catalyses the reaction alpha-D-glucose 1-phosphate + ATP + H(+) = ADP-alpha-D-glucose + diphosphate. It participates in glycan biosynthesis; starch biosynthesis. Activated by 3'phosphoglycerate, inhibited by orthophosphate. Allosteric regulation. Functionally, this protein plays a role in synthesis of starch. It catalyzes the synthesis of the activated glycosyl donor, ADP-glucose from Glc-1-P and ATP. The sequence is that of Glucose-1-phosphate adenylyltransferase large subunit 1 (AGPS1) from Solanum tuberosum (Potato).